Reading from the N-terminus, the 188-residue chain is Large ribosomal subunit protein bL35m (188 aa).

Belongs to the bacterial ribosomal protein bL35 family. As to quaternary structure, component of the mitochondrial large ribosomal subunit (mt-LSU). Mature mammalian 55S mitochondrial ribosomes consist of a small (28S) and a large (39S) subunit. The 28S small subunit contains a 12S ribosomal RNA (12S mt-rRNA) and 30 different proteins. The 39S large subunit contains a 16S rRNA (16S mt-rRNA), a copy of mitochondrial valine transfer RNA (mt-tRNA(Val)), which plays an integral structural role, and 52 different proteins.

Its subcellular location is the mitochondrion. This chain is Large ribosomal subunit protein bL35m (MRPL35), found in Homo sapiens (Human).